The chain runs to 370 residues: Translocating chain-associated membrane protein 2 (370 aa).

Topologically, residues 1–22 (MAFRRRTKSYPLFSQEFVIHNH) are cytoplasmic. A helical transmembrane segment spans residues 23–43 (ADIGFCLVLCVLIGLMFEVTA). At 44–75 (KTAFLFILPQYNISVPTADSETVHYHYGPKDL) the chain is on the extracellular side. Asn55 carries N-linked (GlcNAc...) asparagine glycosylation. Residues 76 to 96 (VTILFYIFITIILHAVVQEYI) form a helical membrane-spanning segment. The Cytoplasmic portion of the chain corresponds to 97 to 119 (LDKISKRLHLSKVKHSKFNESGQ). The TLC domain maps to 112-321 (SKFNESGQLV…HSQLRHWREY (210 aa)). The helical transmembrane segment at 120–140 (LVVFHFTSVIWCFYVVVTEGY) threads the bilayer. Topologically, residues 141-159 (LTNPRSLWEDYPHVHLPFQ) are extracellular. Residues 160–180 (VKFFYLCQLAYWLHALPELYF) traverse the membrane as a helical segment. At 181–191 (QKVRKEEIPRQ) the chain is on the cytoplasmic side. Residues 192 to 209 (LQYICLYLVHIAGAYLLN) traverse the membrane as a helical segment. Residues 210–214 (LSRLG) lie on the Extracellular side of the membrane. Residues 215-235 (LILLLLQYSTEFLFHTARLFY) traverse the membrane as a helical segment. Residues 236–250 (FADENNEKLFSAWAA) lie on the Cytoplasmic side of the membrane. A helical membrane pass occupies residues 251–271 (VFGVTRLFILTLAVLAIGFGL). The Extracellular segment spans residues 272–287 (ARMENQAFDPEKGNFN). A helical membrane pass occupies residues 288-308 (TLFCRLCVLLLVCAAQAWLMW). Residues 309-370 (RFIHSQLRHW…SPRTKKLKSP (62 aa)) are Cytoplasmic-facing. The tract at residues 348–370 (YHENGVVKAENGTSPRTKKLKSP) is disordered.

This sequence belongs to the TRAM family. As to quaternary structure, interacts with SERCA2B and COL1A1.

It localises to the membrane. Its function is as follows. Necessary for collagen type I synthesis. May couple the activity of the ER Ca(2+) pump SERCA2B with the activity of the translocon. This coupling may increase the local Ca(2+) concentration at the site of collagen synthesis, and a high Ca(2+) concentration may be necessary for the function of molecular chaperones involved in collagen folding. Required for proper insertion of the first transmembrane helix N-terminus of TM4SF20 into the ER lumen, may act as a ceramide sensor for regulated alternative translocation (RAT). In Homo sapiens (Human), this protein is Translocating chain-associated membrane protein 2 (TRAM2).